A 487-amino-acid polypeptide reads, in one-letter code: Aspyridones efflux protein apdF (487 aa).

The span at Met1–Glu21 shows a compositional bias: basic and acidic residues. The tract at residues Met1–Phe25 is disordered. A helical transmembrane segment spans residues Val35–Val55. The N-linked (GlcNAc...) asparagine glycan is linked to Asn67. A run of 8 helical transmembrane segments spans residues Trp75–Phe95, Gly99–Leu119, Phe126–Leu146, Ala159–Leu179, Trp191–Ile211, Val234–Leu254, Gly262–Gly282, and Ile293–Trp313. Asn319 carries N-linked (GlcNAc...) asparagine glycosylation. The next 3 helical transmembrane spans lie at Ile322–Ala342, Ile354–Pro374, and Gly385–Phe405.

Belongs to the major facilitator superfamily. Monocarboxylate porter (TC 2.A.1.13) family.

It is found in the cell membrane. Its function is as follows. Efflux pump that may be involved in the secretion of aspyridones. In Emericella nidulans (strain FGSC A4 / ATCC 38163 / CBS 112.46 / NRRL 194 / M139) (Aspergillus nidulans), this protein is Aspyridones efflux protein apdF.